The chain runs to 277 residues: Elongation factor Ts (277 aa).

The involved in Mg(2+) ion dislocation from EF-Tu stretch occupies residues 79–82; sequence TDFV.

The protein belongs to the EF-Ts family.

It is found in the cytoplasm. Associates with the EF-Tu.GDP complex and induces the exchange of GDP to GTP. It remains bound to the aminoacyl-tRNA.EF-Tu.GTP complex up to the GTP hydrolysis stage on the ribosome. This is Elongation factor Ts from Phytoplasma australiense.